The primary structure comprises 545 residues: Chaperonin GroEL (545 aa).

Residues Thr-29–Pro-32, Asp-86–Thr-90, Gly-413, Asn-476–Ala-478, and Asp-492 each bind ATP.

This sequence belongs to the chaperonin (HSP60) family. Forms a cylinder of 14 subunits composed of two heptameric rings stacked back-to-back. Interacts with the co-chaperonin GroES.

It is found in the cytoplasm. The catalysed reaction is ATP + H2O + a folded polypeptide = ADP + phosphate + an unfolded polypeptide.. Its function is as follows. Together with its co-chaperonin GroES, plays an essential role in assisting protein folding. The GroEL-GroES system forms a nano-cage that allows encapsulation of the non-native substrate proteins and provides a physical environment optimized to promote and accelerate protein folding. The sequence is that of Chaperonin GroEL from Shouchella clausii (strain KSM-K16) (Alkalihalobacillus clausii).